A 134-amino-acid polypeptide reads, in one-letter code: Small ribosomal subunit protein bS16 (134 aa).

The interval 79–134 (AGIAKRPSRNNPTKGEPGKKAQERLALAKQAEEEAAAKAAEAAAAAAAPAEEAASE) is disordered. Over residues 115 to 134 (AKAAEAAAAAAAPAEEAASE) the composition is skewed to low complexity.

The protein belongs to the bacterial ribosomal protein bS16 family.

The polypeptide is Small ribosomal subunit protein bS16 (Brucella canis (strain ATCC 23365 / NCTC 10854 / RM-666)).